Consider the following 196-residue polypeptide: Imidazoleglycerol-phosphate dehydratase (196 aa).

It belongs to the imidazoleglycerol-phosphate dehydratase family.

It localises to the cytoplasm. The catalysed reaction is D-erythro-1-(imidazol-4-yl)glycerol 3-phosphate = 3-(imidazol-4-yl)-2-oxopropyl phosphate + H2O. It participates in amino-acid biosynthesis; L-histidine biosynthesis; L-histidine from 5-phospho-alpha-D-ribose 1-diphosphate: step 6/9. This is Imidazoleglycerol-phosphate dehydratase from Clostridium botulinum (strain Langeland / NCTC 10281 / Type F).